The following is a 738-amino-acid chain: MGLGLLASRALRSSRIIRNSTRTIVSTPELKNADAAAAAAAADAPSDLPKRHPVGGARVHLPNPEDVIEVFVDGYPVKIPKGMTVLQACEIAGVDIPRFCYHSRLSIAGNCRMCLVEVEKSPKPVASCAMPALPGMKIKTDTPIAKKAREGVMEFLLMNHPLDCPICDQGGECDLQDQSMAFGSDRGRFTEMKRSVVDKNLGPLVKTVMTRCIQCTRCVRFASEVAGVEDLGMLGRGSGEEIGTYVEKLMTSELSGNVIDICPVGALTSKPFAFKARNWELKGTESIDVTDAVGSNIRIDSRGPEVMRVVPRLNEDINEEWISDKTRFFYDGLKRQRLNDPMIRGADGRFQAVSWRDALAIVAEVMHQIKPEEIVGVAGKLSDAESMMALKDLLNKMGSNNIFCEGNGMHPNADLRSGYIMNTSISGLEKADAFLLVGTQPRVEAAMVNARIHKTVKATNAKVGYVGPAADFNYDHEHLGTDPQTLVEIAEGRHPFSSALKNAKNPVIIVGAGVFDRDDKDAVFAAVDTIAKNNNVVRPDWNGLNVLLLNAAQVAALDLGLVPESDKCIESAKFVYLMGADDVNLDKLPDDAFVVYQGHHGDRGVYRANVILPASAFTEKEGIYENTEGCAQITLPAVPTVGDARDDWKIVRALSEVAGVGLPYDSLGAIRSRIKTVAPNLLEVDERQPATFSTSLRPEVSQKVSATPFTPAVENFYMTDAITRASKIMAQCSALLKK.

The N-terminal 27 residues, M1–T27, are a transit peptide targeting the mitochondrion. The 2Fe-2S ferredoxin-type domain maps to D66–I144. The [2Fe-2S] cluster site is built by C100, C111, C114, and C128. A 4Fe-4S His(Cys)3-ligated-type domain is found at I144–G183. Residues H160, C164, C167, C173, C212, C215, C218, and C262 each coordinate [4Fe-4S] cluster. One can recognise a 4Fe-4S Mo/W bis-MGD-type domain in the interval L281–R337.

This sequence belongs to the complex I 75 kDa subunit family. As to quaternary structure, complex I is composed of about 45 different subunits. This is a component of the iron-sulfur (IP) fragment of the enzyme. [2Fe-2S] cluster serves as cofactor. [4Fe-4S] cluster is required as a cofactor.

It localises to the mitochondrion inner membrane. The enzyme catalyses a ubiquinone + NADH + 5 H(+)(in) = a ubiquinol + NAD(+) + 4 H(+)(out). In terms of biological role, core subunit of the mitochondrial membrane respiratory chain NADH dehydrogenase (Complex I) that is believed to belong to the minimal assembly required for catalysis. Complex I functions in the transfer of electrons from NADH to the respiratory chain. The immediate electron acceptor for the enzyme is believed to be ubiquinone. This is the largest subunit of complex I and it is a component of the iron-sulfur (IP) fragment of the enzyme. It may form part of the active site crevice where NADH is oxidized. This Solanum tuberosum (Potato) protein is NADH dehydrogenase [ubiquinone] iron-sulfur protein 1, mitochondrial.